The sequence spans 199 residues: Ion-translocating oxidoreductase complex subunit A (199 aa).

6 consecutive transmembrane segments (helical) span residues 8–28, 49–69, 75–95, 106–126, 138–158, and 178–198; these read LFTIFLEGVFIKNFLLIQFLG, VVFVMAMAATVSFALYNFILV, FLRTIAFIVVIAALVQLVEFI, SLGIYLPLITTNCAVLGAVLL, VVFGVAAGLGYTVAMLMMAAI, and AFFIATIMSMSFVNFFGVIPL.

It belongs to the NqrDE/RnfAE family. In terms of assembly, the Rnf complex is probably composed of eight subunits, including RnfA, RnfB, RnfC, RnfD, RnfE and RnfG.

The protein resides in the cell membrane. Its function is as follows. Part of a membrane-bound complex that couples electron transfer with translocation of ions across the membrane. Catalyzes Na(+) transport, most probably coupled to electron transfer from reduced ferredoxin to methanophenazine and heterodisulfide reductase. Involved in heterodisulfide reduction during methanogenesis from acetate. This is Ion-translocating oxidoreductase complex subunit A from Methanosarcina acetivorans (strain ATCC 35395 / DSM 2834 / JCM 12185 / C2A).